Here is a 120-residue protein sequence, read N- to C-terminus: Large ribosomal subunit protein uL18 (120 aa).

The protein belongs to the universal ribosomal protein uL18 family. As to quaternary structure, part of the 50S ribosomal subunit; part of the 5S rRNA/L5/L18/L25 subcomplex. Contacts the 5S and 23S rRNAs.

Its function is as follows. This is one of the proteins that bind and probably mediate the attachment of the 5S RNA into the large ribosomal subunit, where it forms part of the central protuberance. This is Large ribosomal subunit protein uL18 from Bartonella henselae (strain ATCC 49882 / DSM 28221 / CCUG 30454 / Houston 1) (Rochalimaea henselae).